The primary structure comprises 200 residues: Small ribosomal subunit protein mS26 (200 aa).

Residues 1-27 constitute a mitochondrion transit peptide; the sequence is MLRALNRLAARPGGQPPTLLLLPVRGR. At Lys-159 the chain carries N6-acetyllysine.

It belongs to the mitochondrion-specific ribosomal protein mS26 family. Component of the mitochondrial ribosome small subunit (28S) which comprises a 12S rRNA and about 30 distinct proteins.

It is found in the mitochondrion. This chain is Small ribosomal subunit protein mS26 (Mrps26), found in Rattus norvegicus (Rat).